Reading from the N-terminus, the 107-residue chain is Dispanin subfamily A member 2b (107 aa).

Residues 1-31 (MEYRTDQVPMSPRSVQGAPGTLPIRDHLPWS) are Extracellular-facing. Residues 32–52 (IFNLFYMNVCCLGLTAMIFSV) form a helical membrane-spanning segment. Residues Cys-41 and Cys-42 are each lipidated (S-palmitoyl cysteine). The Cytoplasmic portion of the chain corresponds to 53–77 (KSRDRKVVGDVEGARHYGSTARSLN). A helical transmembrane segment spans residues 78–98 (IAATVLGILLIIILIGLAATG). Residues 99–107 (TIQALKYKG) lie on the Extracellular side of the membrane.

This sequence belongs to the CD225/Dispanin family. As to expression, expressed various cell types in torpedo electric organ and muscle, especially fibroblasts, capillary endothelial cells, and axonal cuff cells.

It is found in the cell membrane. The polypeptide is Dispanin subfamily A member 2b (Torpedo marmorata (Marbled electric ray)).